Consider the following 42-residue polypeptide: Fungal defensin eurocin (42 aa).

Beta-D-GlcNAc-(1-&gt;4)-Mur2Ac(oyl-L-Ala-gamma-D-Glu-L-Lys-D-Ala-D-Ala)-di-trans,octa-cis-undecaprenyl diphosphate contacts are provided by F2, G3, C4, and H14. Cystine bridges form between C4–C27, C11–C38, and C15–C40. The tract at residues 31–35 (WYLGH) is interaction site with membranes lipids. C38 serves as a coordination point for beta-D-GlcNAc-(1-&gt;4)-Mur2Ac(oyl-L-Ala-gamma-D-Glu-L-Lys-D-Ala-D-Ala)-di-trans,octa-cis-undecaprenyl diphosphate.

The protein belongs to the invertebrate defensin family.

It localises to the secreted. It is found in the target cell membrane. Its function is as follows. Antimicrobial peptide that acts against Gram-positive bacteria but not against Gram-negative bacteria. It selectively inhibits peptidoglycan biosynthesis through complex formation with the cell wall precursor lipid II (1:1 molar ratio) thus inhibiting cell wall synthesis. It does not disrupt cell membranes. In vivo, is effective against an intraperitoneal infection with S.pneumoniae. In vitro, it shows very low hemolytic and cytolytic activities. The polypeptide is Fungal defensin eurocin (Aspergillus amstelodami).